Here is a 112-residue protein sequence, read N- to C-terminus: Nitrogen regulatory protein GlnK2 (112 aa).

ADP contacts are provided by residues Thr-29, 38–39, Val-64, and 87–90; these read QQ and GDGK. ATP-binding positions include Thr-29, 38–39, Val-64, 87–90, and 101–103; these read QQ, GDGK, and RIR.

It belongs to the P(II) protein family. Homotrimer. Interacts and forms a complex with Amt2.

The protein resides in the cytoplasm. With respect to regulation, binding of adenosine nucleotides results in distinct, cooperative behavior for ATP and ADP. GlnK2 is completely insensitive to 2-oxoglutarate at a low level of intracellular nitrogen. Involved in the regulation of nitrogen metabolism. Regulates the activity of its targets by protein-protein interaction in response to the nitrogen status of the cell. Regulates the activity of the ammonia channel Amt2 via direct interaction. This Archaeoglobus fulgidus (strain ATCC 49558 / DSM 4304 / JCM 9628 / NBRC 100126 / VC-16) protein is Nitrogen regulatory protein GlnK2.